A 429-amino-acid polypeptide reads, in one-letter code: Serine--tRNA ligase (429 aa).

Residue 235 to 237 (TAE) participates in L-serine binding. 266-268 (RSE) is an ATP binding site. Glu-289 is an L-serine binding site. 353-356 (EISS) lines the ATP pocket. Ser-389 lines the L-serine pocket.

It belongs to the class-II aminoacyl-tRNA synthetase family. Type-1 seryl-tRNA synthetase subfamily. In terms of assembly, homodimer. The tRNA molecule binds across the dimer.

It localises to the cytoplasm. It carries out the reaction tRNA(Ser) + L-serine + ATP = L-seryl-tRNA(Ser) + AMP + diphosphate + H(+). The enzyme catalyses tRNA(Sec) + L-serine + ATP = L-seryl-tRNA(Sec) + AMP + diphosphate + H(+). It functions in the pathway aminoacyl-tRNA biosynthesis; selenocysteinyl-tRNA(Sec) biosynthesis; L-seryl-tRNA(Sec) from L-serine and tRNA(Sec): step 1/1. Functionally, catalyzes the attachment of serine to tRNA(Ser). Is also able to aminoacylate tRNA(Sec) with serine, to form the misacylated tRNA L-seryl-tRNA(Sec), which will be further converted into selenocysteinyl-tRNA(Sec). The polypeptide is Serine--tRNA ligase (Histophilus somni (strain 2336) (Haemophilus somnus)).